Reading from the N-terminus, the 54-residue chain is H-bracotoxin-Cf4 (54 aa).

Residues 1–21 (MSKLFIFFLLVALLAFVSSEA) form the signal peptide. 3 disulfides stabilise this stretch: Cys-24-Cys-39, Cys-31-Cys-43, and Cys-38-Cys-53.

In terms of tissue distribution, expressed by the venom duct.

The protein localises to the secreted. Functionally, this endoparasitoid wasp peptide has a role in disruption of the cellular host immune response, since it reduces the capacity of D.saccharalis hemocytes to encapsulate foreign bodies. On the other hand, it shows no effect on the humoral immune response, since it has no effect on phenoloxidase activity. This is H-bracotoxin-Cf4 from Cotesia flavipes (Parasitic wasp).